Consider the following 336-residue polypeptide: Adenylate isopentenyltransferase 3, chloroplastic (336 aa).

Residues 1-55 (MIMKISMAMCKQPLPPSPTLDFPPARFGPNMLTLNPYGPKDKVVVIMGATGTGKS) constitute a chloroplast transit peptide. 48–55 (GATGTGKS) serves as a coordination point for ATP. At cysteine 333 the chain carries Cysteine methyl ester. The S-farnesyl cysteine moiety is linked to residue cysteine 333. The propeptide at 334–336 (LVA) is removed in mature form.

Belongs to the IPP transferase family. Post-translationally, farnesylated. In terms of tissue distribution, expressed the phloem companion cells.

The protein localises to the plastid. The protein resides in the chloroplast. It localises to the nucleus membrane. It is found in the cytoplasm. The catalysed reaction is dimethylallyl diphosphate + ADP = N(6)-(dimethylallyl)adenosine 5'-diphosphate + diphosphate. It catalyses the reaction dimethylallyl diphosphate + ATP = N(6)-(dimethylallyl)adenosine 5'-triphosphate + diphosphate. Its function is as follows. Involved in cytokinin biosynthesis. Catalyzes the transfer of an isopentenyl group from dimethylallyl diphosphate (DMAPP) to ATP and ADP. This chain is Adenylate isopentenyltransferase 3, chloroplastic (IPT3), found in Arabidopsis thaliana (Mouse-ear cress).